A 492-amino-acid polypeptide reads, in one-letter code: MNRGGSSASASANYLLCTNCRKVLRKDKRIRVSQPLTRGPSAFIPEKEVVQANTADERTNFLVEEYSTSGRLDNITQVMSLHTQYLESFLRSQFYMLRMDGPLPLPDRHYIAIMAAARHQCSYLINMHVDEFLKTGGIAEWLNGLEYVPQRLRNLNEINKLLAHRPWLITKEHIQKLVKTGENNWSLPELVHAVVLLAHYHALASFVFGSGINPERDPGIANGFRLISVSSFCVCDLANDNSIENTSLAGSNFGIVDSLGELEALMERMKRLQEDREDDETTREEMTTRFEKEKKESLFVVPGETLHAFPHSDFEDDVIVTADVSRYIEDPSFGYEDFARRGEEHLPTFRAQDYTWENHGFSLVNRLYSDIGHLLDEKFRMVYNLTYNTMATHEDVDTTTLRRALFNYVHCMFGIRYDDYDYGEVNQLLERSLKVYIKTVTCYPERTTKRMYDSYWRQFTHSEKVHVNLLLMEARMQAELLYALRAITRHLT.

The interval 62–243 (LVEEYSTSGR…VCDLANDNSI (182 aa)) is N-terminal domain; may mediate the alkylhydroperoxide reductase activity. Cys121 acts as the Cysteine sulfenic acid (-SOH) intermediate in catalysis. A C-terminal domain; mediates TORC1 regulation region spans residues 310 to 492 (PHSDFEDDVI…ALRAITRHLT (183 aa)). L-leucine-binding positions include 386–389 (TYNT), Thr398, and Glu463.

It belongs to the sestrin family. As to quaternary structure, interacts with the GATOR2 complex which is composed of MIOS, SEC13, SEH1L, WDR24 and WDR59; the interaction is not regulated by leucine. Interacts with RRAGA, RRAGB, RRAGC and RRAGD; may function as a guanine nucleotide dissociation inhibitor for RRAGs and regulate them. Interacts with the TORC2 complex; through RICTOR. In terms of tissue distribution, detected in liver and skeletal muscles.

The protein localises to the cytoplasm. The enzyme catalyses a hydroperoxide + L-cysteinyl-[protein] = S-hydroxy-L-cysteinyl-[protein] + an alcohol. Its function is as follows. May function as an intracellular leucine sensor that negatively regulates the TORC1 signaling pathway. May also regulate the insulin-receptor signaling pathway through activation of TORC2. This metabolic regulator may also play a role in protection against oxidative and genotoxic stresses. May prevent the accumulation of reactive oxygen species (ROS) through the alkylhydroperoxide reductase activity born by the N-terminal domain of the protein. The protein is Sestrin-3 of Mus musculus (Mouse).